Consider the following 193-residue polypeptide: Iron-sulfur flavoprotein MJ1083 (193 aa).

Residues Cys-47, Cys-50, Cys-53, and Cys-59 each contribute to the [4Fe-4S] cluster site.

It belongs to the SsuE family. Isf subfamily. In terms of assembly, homodimer. It depends on FMN as a cofactor. Requires [4Fe-4S] cluster as cofactor.

In terms of biological role, redox-active protein probably involved in electron transport. The sequence is that of Iron-sulfur flavoprotein MJ1083 from Methanocaldococcus jannaschii (strain ATCC 43067 / DSM 2661 / JAL-1 / JCM 10045 / NBRC 100440) (Methanococcus jannaschii).